A 190-amino-acid polypeptide reads, in one-letter code: Adenine phosphoribosyltransferase (190 aa).

This sequence belongs to the purine/pyrimidine phosphoribosyltransferase family. Homodimer.

The protein localises to the cytoplasm. It carries out the reaction AMP + diphosphate = 5-phospho-alpha-D-ribose 1-diphosphate + adenine. Its pathway is purine metabolism; AMP biosynthesis via salvage pathway; AMP from adenine: step 1/1. Catalyzes a salvage reaction resulting in the formation of AMP, that is energically less costly than de novo synthesis. The chain is Adenine phosphoribosyltransferase from Cupriavidus pinatubonensis (strain JMP 134 / LMG 1197) (Cupriavidus necator (strain JMP 134)).